The chain runs to 396 residues: Elongation factor Tu (396 aa).

The tr-type G domain occupies 10–205 (KEHVNIGTIG…AVDNYIETPV (196 aa)). Residues 19–26 (GHVDHGKT) form a G1 region. 19–26 (GHVDHGKT) is a binding site for GTP. Residue threonine 26 coordinates Mg(2+). Residues 60–64 (GITIN) are G2. The segment at 81-84 (DCPG) is G3. GTP contacts are provided by residues 81–85 (DCPGH) and 136–139 (NKVD). The tract at residues 136–139 (NKVD) is G4. The tract at residues 175–177 (SAL) is G5.

It belongs to the TRAFAC class translation factor GTPase superfamily. Classic translation factor GTPase family. EF-Tu/EF-1A subfamily. Monomer.

Its subcellular location is the cytoplasm. The catalysed reaction is GTP + H2O = GDP + phosphate + H(+). Functionally, GTP hydrolase that promotes the GTP-dependent binding of aminoacyl-tRNA to the A-site of ribosomes during protein biosynthesis. The protein is Elongation factor Tu of Mycoplasmopsis pulmonis (strain UAB CTIP) (Mycoplasma pulmonis).